A 559-amino-acid chain; its full sequence is Dihydroxy-acid dehydratase (559 aa).

Cysteine 49 serves as a coordination point for [2Fe-2S] cluster. Aspartate 81 contacts Mg(2+). Cysteine 122 lines the [2Fe-2S] cluster pocket. 2 residues coordinate Mg(2+): aspartate 123 and lysine 124. The residue at position 124 (lysine 124) is an N6-carboxylysine. Cysteine 194 is a binding site for [2Fe-2S] cluster. Glutamate 446 is a binding site for Mg(2+). Serine 472 serves as the catalytic Proton acceptor.

The protein belongs to the IlvD/Edd family. As to quaternary structure, homodimer. [2Fe-2S] cluster is required as a cofactor. Mg(2+) serves as cofactor.

It carries out the reaction (2R)-2,3-dihydroxy-3-methylbutanoate = 3-methyl-2-oxobutanoate + H2O. The catalysed reaction is (2R,3R)-2,3-dihydroxy-3-methylpentanoate = (S)-3-methyl-2-oxopentanoate + H2O. Its pathway is amino-acid biosynthesis; L-isoleucine biosynthesis; L-isoleucine from 2-oxobutanoate: step 3/4. The protein operates within amino-acid biosynthesis; L-valine biosynthesis; L-valine from pyruvate: step 3/4. In terms of biological role, functions in the biosynthesis of branched-chain amino acids. Catalyzes the dehydration of (2R,3R)-2,3-dihydroxy-3-methylpentanoate (2,3-dihydroxy-3-methylvalerate) into 2-oxo-3-methylpentanoate (2-oxo-3-methylvalerate) and of (2R)-2,3-dihydroxy-3-methylbutanoate (2,3-dihydroxyisovalerate) into 2-oxo-3-methylbutanoate (2-oxoisovalerate), the penultimate precursor to L-isoleucine and L-valine, respectively. This Prochlorococcus marinus (strain MIT 9515) protein is Dihydroxy-acid dehydratase.